A 678-amino-acid chain; its full sequence is DNA ligase (678 aa).

Residues 34–38, 83–84, and Glu-114 each bind NAD(+); these read DSEYD and SL. Lys-116 (N6-AMP-lysine intermediate) is an active-site residue. NAD(+) is bound by residues Arg-137, Glu-176, Lys-293, and Lys-317. Positions 411, 414, 429, and 435 each coordinate Zn(2+). One can recognise a BRCT domain in the interval 594–678; sequence PTRQPLNGES…LMAGYGQTLS (85 aa).

Belongs to the NAD-dependent DNA ligase family. LigA subfamily. Mg(2+) serves as cofactor. Requires Mn(2+) as cofactor.

It carries out the reaction NAD(+) + (deoxyribonucleotide)n-3'-hydroxyl + 5'-phospho-(deoxyribonucleotide)m = (deoxyribonucleotide)n+m + AMP + beta-nicotinamide D-nucleotide.. Its function is as follows. DNA ligase that catalyzes the formation of phosphodiester linkages between 5'-phosphoryl and 3'-hydroxyl groups in double-stranded DNA using NAD as a coenzyme and as the energy source for the reaction. It is essential for DNA replication and repair of damaged DNA. The chain is DNA ligase from Acinetobacter baumannii (strain AB307-0294).